A 419-amino-acid chain; its full sequence is Phosphoglycerate kinase (419 aa).

Residues 21 to 23 (DFN), R36, 60 to 63 (HLGD), R137, and R174 each bind substrate. ATP contacts are provided by residues K225, G316, E347, and 376–379 (GGDS).

Belongs to the phosphoglycerate kinase family. In terms of assembly, monomer.

It is found in the cytoplasm. The enzyme catalyses (2R)-3-phosphoglycerate + ATP = (2R)-3-phospho-glyceroyl phosphate + ADP. It functions in the pathway carbohydrate degradation; glycolysis; pyruvate from D-glyceraldehyde 3-phosphate: step 2/5. The polypeptide is Phosphoglycerate kinase (pgk) (Treponema pallidum (strain Nichols)).